The following is a 204-amino-acid chain: Holliday junction branch migration complex subunit RuvA (204 aa).

The segment at 1–64 (MIGRLQGKLI…EDAHLLFGFS (64 aa)) is domain I. The segment at 65-143 (TKTDRTLFRE…GLRQPDFFVE (79 aa)) is domain II. The tract at residues 144–155 (SKHITVPDIVSA) is flexible linker. Residues 156–204 (EKETPNDEAVAALVALGYKPPEAAKMVKKVANGDLTSEQLIREALKAAL) form a domain III region.

It belongs to the RuvA family. In terms of assembly, homotetramer. Forms an RuvA(8)-RuvB(12)-Holliday junction (HJ) complex. HJ DNA is sandwiched between 2 RuvA tetramers; dsDNA enters through RuvA and exits via RuvB. An RuvB hexamer assembles on each DNA strand where it exits the tetramer. Each RuvB hexamer is contacted by two RuvA subunits (via domain III) on 2 adjacent RuvB subunits; this complex drives branch migration. In the full resolvosome a probable DNA-RuvA(4)-RuvB(12)-RuvC(2) complex forms which resolves the HJ.

It localises to the cytoplasm. The RuvA-RuvB-RuvC complex processes Holliday junction (HJ) DNA during genetic recombination and DNA repair, while the RuvA-RuvB complex plays an important role in the rescue of blocked DNA replication forks via replication fork reversal (RFR). RuvA specifically binds to HJ cruciform DNA, conferring on it an open structure. The RuvB hexamer acts as an ATP-dependent pump, pulling dsDNA into and through the RuvAB complex. HJ branch migration allows RuvC to scan DNA until it finds its consensus sequence, where it cleaves and resolves the cruciform DNA. The sequence is that of Holliday junction branch migration complex subunit RuvA from Actinobacillus succinogenes (strain ATCC 55618 / DSM 22257 / CCUG 43843 / 130Z).